Reading from the N-terminus, the 204-residue chain is HTH-type transcriptional activator BcrR (204 aa).

The Cytoplasmic segment spans residues 1–81 (MEFNEKLQQL…ETENRSNLKK (81 aa)). An HTH cro/C1-type domain is found at 7–61 (LQQLRTGKNLTQEQLAEQLYVSRTAISKWESGKGYPNMESLKCISKFFSVTIDEL). The H-T-H motif DNA-binding region spans 18 to 37 (QEQLAEQLYVSRTAISKWES). Residues 82-102 (IYNYIYGILDMMAVAFIFLPL) traverse the membrane as a helical segment. Topologically, residues 103–126 (YGNSVGGYVYAVNLLSFTATTPFN) are extracellular. A helical transmembrane segment spans residues 127–147 (LAVYWSAFAALIIIGIGKIIS). Topologically, residues 148–154 (THLDKEK) are cytoplasmic. Residues 155–175 (WGGIATKCSLTITALAVCFFA) form a helical membrane-spanning segment. Residues 176–181 (AAREPY) lie on the Extracellular side of the membrane. The chain crosses the membrane as a helical span at residues 182–202 (ITVLVFLLLIGKIFVWIKQMG). Topologically, residues 203-204 (MK) are cytoplasmic.

It localises to the cell membrane. With respect to regulation, constitutively bound to the bcrABD promoter. Requires bacitracin for activation, probably through a conformational change, such as the oligomerization of inactive dimers to form active tetramers. In terms of biological role, functions both as a membrane-bound sensor and a transducer of bacitracin availability to activate transcription of the bcrABD operon in the presence of bacitracin. Binds specifically to two inverted repeat sequences on the bcrABD promoter, irrespective of bacitracin concentration. This Enterococcus faecalis (Streptococcus faecalis) protein is HTH-type transcriptional activator BcrR.